We begin with the raw amino-acid sequence, 1392 residues long: FERM and PDZ domain-containing protein 2 (1392 aa).

The KIND domain maps to 15-197 (VTLASALQVR…SEVERRVVEE (183 aa)). Positions 211 to 246 (SRLHQADGESPGAPASDALQPRRVSERSAETQSSLE) are disordered. One can recognise an FERM domain in the interval 342 to 642 (CVVLLNGRCL…WFNAQTGSKH (301 aa)). In terms of domain architecture, PDZ 1 spans 775 to 861 (GLFGEPNQDI…MAVRMIQNSP (87 aa)). Positions 903 to 930 (GRQSPHIHDQDRSVRGTEMAQGAGSCPP) are disordered. A compositionally biased stretch (basic and acidic residues) spans 908–917 (HIHDQDRSVR). An interaction with GRIN2A and GRIN2B region spans residues 937 to 1027 (TGEIYFVELV…VARLVLERRG (91 aa)). PDZ domains are found at residues 950-1035 (GTLG…PQCP) and 1079-1167 (RGLG…PEME). The segment at 1186–1236 (CAGSEQSPSLDQEDNWRDSTSLDAGEGLSPGPESSYKDVRQVKGDREKERP) is disordered. The segment covering 1220 to 1236 (SYKDVRQVKGDREKERP) has biased composition (basic and acidic residues).

As to quaternary structure, interacts (via the second PDZ domain) with CTNND2 (via the extreme C-terminus). Interacts (via the second PDZ domain) with PKP4 (via the extreme C-terminus); the interaction directs FRMPD2 to the basolateral membranes. Interacts (via the second PDZ domain) with ARVCF (via the extreme C-terminus). Interacts (via the second PDZ domain) with NMDAR subunits GRIN2A/GLUN2A and GRIN2B/GLUN2B (via the extreme C-terminus); the interaction is direct and is likely to promote NMDAR-mediated neural signal transmission. Binds GRIN2A with lower affinity than GRIN2B. Interacts (via the third PDZ domain) with LRIT1 (via the extreme C-terminus); the interaction leads to their colocalization in photoreceptor synapses. Interacts with NOD2; the interaction is likely to trigger NOD2-mediated nuclear factor kappaB activation.

It localises to the cytoplasm. The protein localises to the postsynaptic density. It is found in the basolateral cell membrane. Its subcellular location is the cell junction. The protein resides in the tight junction. Functions as a scaffold protein and likely plays a role in N-methyl-D-aspartic acid receptor (NMDAR)-mediated synaptic excitatory transmission. May be involved in synapse formation in cone photoreceptor cells. May play a role in the regulation of tight junction formation. Binds phosphatidylinositol 3,4-bisphosphate (PtdIns(3,4)P2). May pNF-kappa-Blay a role in the regulation of NOD2-mediated NF-kappa-B activation in immune response. The polypeptide is FERM and PDZ domain-containing protein 2 (Mus musculus (Mouse)).